The chain runs to 657 residues: Protein mono-ADP-ribosyltransferase TIPARP (657 aa).

Residues methionine 1 to proline 10 show a composition bias toward acidic residues. Positions methionine 1–aspartate 21 are disordered. Residue cysteine 39 is modified to ADP-ribosylcysteine. Positions lysine 41–arginine 47 match the Nuclear localization signal motif. Residues glutamate 237–leucine 264 form a C3H1-type zinc finger. The WWE domain occupies serine 332–isoleucine 410. One can recognise a PARP catalytic domain in the interval tyrosine 449–isoleucine 657.

It belongs to the ARTD/PARP family. Interacts with AHR. In terms of processing, auto-mono-ADP-ribosylated.

It localises to the nucleus. It catalyses the reaction L-aspartyl-[protein] + NAD(+) = 4-O-(ADP-D-ribosyl)-L-aspartyl-[protein] + nicotinamide. It carries out the reaction L-glutamyl-[protein] + NAD(+) = 5-O-(ADP-D-ribosyl)-L-glutamyl-[protein] + nicotinamide. The catalysed reaction is L-cysteinyl-[protein] + NAD(+) = S-(ADP-D-ribosyl)-L-cysteinyl-[protein] + nicotinamide + H(+). With respect to regulation, ADP-ribosyltransferase activity is inhibited by PJ34; inhibition is however not specific to TIPARP and other PARP-domain containing proteins are also inhibited by PJ34. Partially inhibited by KU0058948. Functionally, ADP-ribosyltransferase that mediates mono-ADP-ribosylation of glutamate, aspartate and cysteine residues on target proteins. Acts as a negative regulator of AHR by mediating mono-ADP-ribosylation of AHR, leading to inhibit transcription activator activity of AHR. The chain is Protein mono-ADP-ribosyltransferase TIPARP from Homo sapiens (Human).